The sequence spans 721 residues: Exocyst complex component 3-like protein 4 (721 aa).

Disordered stretches follow at residues 1–52 (MPLP…SLGM) and 94–135 (GLTA…QAES). The segment covering 22–37 (SQTLPVTTWKSNSMKE) has biased composition (polar residues). Ser515 bears the Phosphoserine mark.

This sequence belongs to the SEC6 family.

This is Exocyst complex component 3-like protein 4 (Exoc3l4) from Mus musculus (Mouse).